A 482-amino-acid chain; its full sequence is FAD-dependent monooxygenase esdpE (482 aa).

The signal sequence occupies residues 1-21 (MGAERLKVIIVGGSIAGLTLA). 2 residues coordinate FAD: Glu-35 and Arg-108. A glycan (N-linked (GlcNAc...) asparagine) is linked at Asn-243. Residues Asp-308 and Ala-321 each contribute to the FAD site. The chain crosses the membrane as a helical span at residues 440–460 (LFSGSLLLIMSVALLFGVICW).

It belongs to the paxM FAD-dependent monooxygenase family. FAD serves as cofactor.

Its subcellular location is the membrane. It functions in the pathway secondary metabolite biosynthesis; terpenoid biosynthesis. Its function is as follows. FAD-dependent monooxygenase; part of the cluster that mediates the biosynthesis of shearones, diterpenoid pyrones (DPs) which are structurally diverse meroterpenoids consisting of a diterpene linked by a pyrone, and which may exhibit a range of bioactivities. Within the pathway, esdpE takes part to the biosynthesis of the molecular scaffold by catalyzing the formation of an (S)-epoxide ring at the terminal olefin of the geranylgeranyl group. The molecular scaffold is commonly biosynthesized by a series of enzymes including the non-reducing polyketide synthase (NR-PKS) esdpA that generates an alpha-pyrone; the prenyltransferase esdpC that attaches a geranylgeranyl pyrophosphate (GGPP) produced by the GGPP synthase (GGPPS) esdpD onto the pyrone unit; the FAD-dependent monooxygenase esdpE that converts an olefin on the diterpene unit into an epoxide; and the terpene cyclase esdpB that catalyzes the cyclization reactions to give the molecular backbone shearone A. In the modification steps, esdpF oxidizes the hydroxy group to a ketone at C-3 and esdpG then attaches hydroxy groups at both C-11 and C-12. After that, esdpI hydroxylates at C-20 and esdpH hydroxylates at C-6'. The ether bridge is generated by nucleophilic attack of the hydroxy group at C-20 to the carbonyl carbon at C-3. EsdpH can also functions prior to esdpI. The different combinations of these modification enzymes lead to the production of diverse shearone derivatives, shearone I being the end product of the pathway. The alpha-ketoglutarate-dependent dioxygenase esdpJ seems not to be involved in this pathway. The polypeptide is FAD-dependent monooxygenase esdpE (Penicillium shearii (Eupenicillium shearii)).